A 320-amino-acid chain; its full sequence is Tetraspanin-32 (320 aa).

4 helical membrane-spanning segments follow: residues 14-34, 60-80, 90-110, and 203-223; these read MLVT…MVTL, WAFS…VLSA, LMAG…QVVF, and SIGL…WFAI.

This sequence belongs to the tetraspanin (TM4SF) family. In terms of tissue distribution, expressed ubiquitously at low levels. High levels of expression are confined to hematopoietic tissues including peripheral blood leukocytes, thymus and spleen.

The protein resides in the membrane. This chain is Tetraspanin-32 (TSPAN32), found in Homo sapiens (Human).